The sequence spans 145 residues: Secreted RxLR effector protein PSE1 (145 aa).

The N-terminal stretch at 1–21 (MRLSSFIVVGAAVVNLLTSGS) is a signal peptide. The RxLR-dEER signature appears at 53–73 (RLLRYHSNNNRGGDEDIAEER).

The protein belongs to the RxLR effector family.

It localises to the secreted. The protein localises to the host cell. Functionally, secreted effector that impairs both plant effector-triggered immunity and pathogen-associated molecular patterns (PAMP)-triggered immunity (PTI). Suppresses plant cell death as a part of the plant defense responses. Facilitates plant infection by altering the auxin content at the roots penetration points of the of the pathogen. The sequence is that of Secreted RxLR effector protein PSE1 from Phytophthora nicotianae (Potato buckeye rot agent).